A 193-amino-acid polypeptide reads, in one-letter code: Interleukin-18-binding protein (193 aa).

Positions 1 to 28 (MTMRHCWTAGPSSWWVLLLYVHVILARA) are cleaved as a signal peptide. Residues 60 to 161 (PALDVIWPEK…QVAQYHIILA (102 aa)) enclose the Ig-like C2-type domain. 4 N-linked (GlcNAc...) asparagine glycosylation sites follow: N74, N98, N120, and N142. The cysteines at positions 81 and 145 are disulfide-linked. Positions 172-185 (SPSQETLSSHSPVS) are enriched in polar residues. A disordered region spans residues 172 to 193 (SPSQETLSSHSPVSRSAGPGVA).

Its subcellular location is the secreted. Binds to IL-18 and inhibits its activity. Functions as an inhibitor of the early TH1 cytokine response. The chain is Interleukin-18-binding protein (Il18bp) from Mus musculus (Mouse).